Consider the following 268-residue polypeptide: Homeobox protein CDX-1 (268 aa).

The interval Met-1 to Arg-152 is disordered. Composition is skewed to pro residues over residues Thr-29–Tyr-42 and Ala-54–Ala-67. The segment covering Ala-73–Ala-91 has biased composition (low complexity). Residues Phe-92–Gly-108 are compositionally biased toward pro residues. The segment covering Ser-115 to Pro-128 has biased composition (low complexity). The homeobox DNA-binding region spans Lys-154–Asn-213. The interaction with DNA stretch occupies residues Tyr-157–Tyr-178. An interaction with 5-mCpG DNA region spans residues Arg-196–Ala-207. The interval Glu-209–Pro-268 is disordered. Residues Pro-229–Leu-246 show a composition bias toward low complexity.

It belongs to the Caudal homeobox family. Intestinal epithelium.

It localises to the nucleus. In terms of biological role, plays a role in transcriptional regulation. Involved in activated KRAS-mediated transcriptional activation of PRKD1 in colorectal cancer (CRC) cells. Binds to the PRKD1 promoter in colorectal cancer (CRC) cells. Could play a role in the terminal differentiation of the intestine. Binds preferentially to methylated DNA. The sequence is that of Homeobox protein CDX-1 (Cdx1) from Mus musculus (Mouse).